We begin with the raw amino-acid sequence, 276 residues long: uncharacterized protein (276 aa).

A run of 10 helical transmembrane segments spans residues 5–25, 31–51, 63–83, 89–109, 119–139, 142–162, 168–188, 200–220, 231–251, and 253–273; these read IVLALTVTFWGLAFTAIKYSV, IAIASLRFAIANTLFAVIIIL, VFALGIFGVSVYHVFLNLGEV, VASVVISLAPIFVLILSAIFL, VGIIIAFLGVVVISEPSYANI, IALVMVSTVAAAIYTTFGKSL, PITLTSNAMVLGSIPLYPFLP, LIGSIVFLGIFSTFFGYLGWY, ASVFLLAIPVVSLLAGNILLA, and PLTLRTVAGSGLVLLGIYIVV. 2 consecutive EamA domains span residues 12–133 and 150–274; these read TFWG…VISE and VAAA…IVVR.

It belongs to the EamA transporter family.

It is found in the cell membrane. This is an uncharacterized protein from Archaeoglobus fulgidus (strain ATCC 49558 / DSM 4304 / JCM 9628 / NBRC 100126 / VC-16).